Here is a 327-residue protein sequence, read N- to C-terminus: Malate dehydrogenase (327 aa).

Residue 12-18 (GAAGQIA) coordinates NAD(+). Substrate contacts are provided by Arg-93 and Arg-99. Residues Asn-106, Gln-113, and 130-132 (VGN) contribute to the NAD(+) site. Substrate is bound by residues Asn-132 and Arg-163. Catalysis depends on His-188, which acts as the Proton acceptor.

It belongs to the LDH/MDH superfamily. MDH type 2 family.

The enzyme catalyses (S)-malate + NAD(+) = oxaloacetate + NADH + H(+). In terms of biological role, catalyzes the reversible oxidation of malate to oxaloacetate. This chain is Malate dehydrogenase, found in Paraburkholderia phytofirmans (strain DSM 17436 / LMG 22146 / PsJN) (Burkholderia phytofirmans).